The sequence spans 94 residues: uncharacterized protein (94 aa).

Residues 13–33 (IVICLTTIISVTIFYILVSFF) form a helical membrane-spanning segment.

The protein resides in the membrane. This is an uncharacterized protein from Dictyostelium discoideum (Social amoeba).